A 753-amino-acid polypeptide reads, in one-letter code: 5-methyltetrahydropteroyltriglutamate--homocysteine methyltransferase (753 aa).

5-methyltetrahydropteroyltri-L-glutamate-binding positions include 17-20 (RELK) and Lys-117. L-homocysteine contacts are provided by residues 431-433 (IGS) and Glu-484. L-methionine-binding positions include 431 to 433 (IGS) and Glu-484. 5-methyltetrahydropteroyltri-L-glutamate is bound by residues 515–516 (RC) and Trp-561. Residue Asp-599 participates in L-homocysteine binding. L-methionine is bound at residue Asp-599. Position 605 (Glu-605) interacts with 5-methyltetrahydropteroyltri-L-glutamate. The Zn(2+) site is built by His-641, Cys-643, and Glu-665. The active-site Proton donor is His-694. Position 726 (Cys-726) interacts with Zn(2+).

It belongs to the vitamin-B12 independent methionine synthase family. Zn(2+) serves as cofactor.

It catalyses the reaction 5-methyltetrahydropteroyltri-L-glutamate + L-homocysteine = tetrahydropteroyltri-L-glutamate + L-methionine. It participates in amino-acid biosynthesis; L-methionine biosynthesis via de novo pathway; L-methionine from L-homocysteine (MetE route): step 1/1. Its function is as follows. Catalyzes the transfer of a methyl group from 5-methyltetrahydrofolate to homocysteine resulting in methionine formation. In Escherichia coli O8 (strain IAI1), this protein is 5-methyltetrahydropteroyltriglutamate--homocysteine methyltransferase.